A 279-amino-acid polypeptide reads, in one-letter code: MKVISSIQELRDQLRGQNRTAFVPTMGNLHEGHLSLMRLARQHGDPVVASIFVNRLQFGPNEDFDKYPRTLQDDIEKLQQENVYVLFAPTERDMYPEPQEYRVLPPDDLGGILEGEFRPGFFAGVCTVVTKLMSCVQPRVAVFGKKDYQQLMIVRRMCQQLALPVEIVAAETVRDEDGLALSSRNRYLTPDERREAPELAKTLQRVRDSVLGGERDLGKLEQHAHTHLAERGWVPDYIAIRRRANLIAPSAAELEAGEPLVVLAAAKLGATRLIDNLEI.

26 to 33 is an ATP binding site; sequence MGNLHEGH. The Proton donor role is filled by His33. Gln57 is a binding site for (R)-pantoate. Gln57 is a binding site for beta-alanine. Residue 144-147 coordinates ATP; the sequence is GKKD. A (R)-pantoate-binding site is contributed by Gln150. ATP contacts are provided by residues Val173 and 181–184; that span reads LSSR.

Belongs to the pantothenate synthetase family. In terms of assembly, homodimer.

The protein resides in the cytoplasm. The catalysed reaction is (R)-pantoate + beta-alanine + ATP = (R)-pantothenate + AMP + diphosphate + H(+). The protein operates within cofactor biosynthesis; (R)-pantothenate biosynthesis; (R)-pantothenate from (R)-pantoate and beta-alanine: step 1/1. Its function is as follows. Catalyzes the condensation of pantoate with beta-alanine in an ATP-dependent reaction via a pantoyl-adenylate intermediate. The protein is Pantothenate synthetase of Burkholderia cenocepacia (strain ATCC BAA-245 / DSM 16553 / LMG 16656 / NCTC 13227 / J2315 / CF5610) (Burkholderia cepacia (strain J2315)).